Here is a 271-residue protein sequence, read N- to C-terminus: Neurexophilin-1 (271 aa).

The N-terminal stretch at M1–C21 is a signal peptide. The II stretch occupies residues A22–L97. N23, N68, N93, N146, N156, and N162 each carry an N-linked (GlcNAc...) asparagine glycan. The segment at Q98–F176 is III. Residues D177–D185 are IV (linker domain). The interval A186–G271 is v (Cys-rich).

Belongs to the neurexophilin family. In terms of processing, may be proteolytically processed at the boundary between the N-terminal non-conserved and the central conserved domain in neuron-like cells.

The protein localises to the secreted. In terms of biological role, may be signaling molecules that resemble neuropeptides. Ligand for alpha-neurexins. In Bos taurus (Bovine), this protein is Neurexophilin-1 (NXPH1).